Here is a 382-residue protein sequence, read N- to C-terminus: Galactokinase (382 aa).

34 to 37 (EHTD) contacts substrate. 124-130 (GAGLSSS) provides a ligand contact to ATP. Mg(2+)-binding residues include S130 and E162. The Proton acceptor role is filled by D174. Position 223 (Y223) interacts with substrate.

This sequence belongs to the GHMP kinase family. GalK subfamily.

The protein localises to the cytoplasm. The catalysed reaction is alpha-D-galactose + ATP = alpha-D-galactose 1-phosphate + ADP + H(+). The protein operates within carbohydrate metabolism; galactose metabolism. Its function is as follows. Catalyzes the transfer of the gamma-phosphate of ATP to D-galactose to form alpha-D-galactose-1-phosphate (Gal-1-P). In Salmonella heidelberg (strain SL476), this protein is Galactokinase.